The sequence spans 355 residues: Lipoyl synthase (355 aa).

Residues His7–Lys55 form the RPE1 insert domain. The [4Fe-4S] cluster site is built by Cys86, Cys91, Cys97, Cys112, Cys116, Cys119, and Ser325. A Radical SAM core domain is found at Trp98–Leu314.

The protein belongs to the radical SAM superfamily. Lipoyl synthase family. It depends on [4Fe-4S] cluster as a cofactor.

The protein resides in the cytoplasm. It carries out the reaction [[Fe-S] cluster scaffold protein carrying a second [4Fe-4S](2+) cluster] + N(6)-octanoyl-L-lysyl-[protein] + 2 oxidized [2Fe-2S]-[ferredoxin] + 2 S-adenosyl-L-methionine + 4 H(+) = [[Fe-S] cluster scaffold protein] + N(6)-[(R)-dihydrolipoyl]-L-lysyl-[protein] + 4 Fe(3+) + 2 hydrogen sulfide + 2 5'-deoxyadenosine + 2 L-methionine + 2 reduced [2Fe-2S]-[ferredoxin]. The protein operates within protein modification; protein lipoylation via endogenous pathway; protein N(6)-(lipoyl)lysine from octanoyl-[acyl-carrier-protein]: step 2/2. Catalyzes the radical-mediated insertion of two sulfur atoms into the C-6 and C-8 positions of the octanoyl moiety bound to the lipoyl domains of lipoate-dependent enzymes, thereby converting the octanoylated domains into lipoylated derivatives. This is Lipoyl synthase from Rickettsia bellii (strain RML369-C).